Consider the following 697-residue polypeptide: SPX domain-containing membrane protein At1g63010 (697 aa).

Positions 2-145 constitute an SPX domain; it reads VAFGKYLQRK…GYRFADYYVK (144 aa). Helical transmembrane passes span 247–267, 278–298, 315–335, 337–356, 375–395, and 411–431; these read FNSL…TYII, LGAA…AQVF, LVFS…AYDA, SIAL…ARAV, AGFV…AGLL, and LPGW…CISF. The tract at residues 439–459 is disordered; that stretch reads EDGEKNNRNETTSDRVESSRV. 5 helical membrane-spanning segments follow: residues 513 to 533, 544 to 564, 576 to 596, 604 to 624, and 670 to 690; these read LLIY…SSVI, SVAI…ILVG, ILLT…NLFV, VISG…NLSL, and LLNA…VATC.

Belongs to the major facilitator superfamily.

It is found in the membrane. This chain is SPX domain-containing membrane protein At1g63010, found in Arabidopsis thaliana (Mouse-ear cress).